The chain runs to 331 residues: Tryptophan--tRNA ligase (331 aa).

ATP-binding positions include 10-12 and 18-19; these read QPS and GN. The short motif at 11–19 is the 'HIGH' region element; it reads PSGQLTLGN. L-tryptophan is bound at residue D133. ATP contacts are provided by residues 145–147, V184, and 193–197; these read GED and KMSKS. The short motif at 193-197 is the 'KMSKS' region element; it reads KMSKS.

The protein belongs to the class-I aminoacyl-tRNA synthetase family. Homodimer.

It is found in the cytoplasm. It carries out the reaction tRNA(Trp) + L-tryptophan + ATP = L-tryptophyl-tRNA(Trp) + AMP + diphosphate + H(+). Functionally, catalyzes the attachment of tryptophan to tRNA(Trp). In Listeria monocytogenes serovar 1/2a (strain ATCC BAA-679 / EGD-e), this protein is Tryptophan--tRNA ligase.